A 224-amino-acid polypeptide reads, in one-letter code: Cytidylate kinase (224 aa).

11–19 contributes to the ATP binding site; the sequence is GPAAAGKST.

It belongs to the cytidylate kinase family. Type 1 subfamily.

The protein resides in the cytoplasm. The enzyme catalyses CMP + ATP = CDP + ADP. It carries out the reaction dCMP + ATP = dCDP + ADP. The sequence is that of Cytidylate kinase from Geobacillus thermodenitrificans (strain NG80-2).